Reading from the N-terminus, the 1073-residue chain is Serine/threonine-protein kinase 11-interacting protein (1073 aa).

LRR repeat units follow at residues 166 to 187 (ELQT…LQLL), 189 to 210 (ALRV…LTTL), 212 to 233 (ELEY…GIFS), 236 to 257 (KLLT…EQLV), 258 to 279 (NLQH…APLS), and 283 to 304 (YLKK…RSAT). 4 disordered regions span residues 389–409 (VKVR…SQAL), 455–533 (SRSA…EKPE), 724–817 (EVSS…QGMK), and 834–859 (MGSY…SEET). A compositionally biased stretch (acidic residues) spans 515–532 (REEEADELMLGEEEDEKP). 2 stretches are compositionally biased toward polar residues: residues 779–788 (MDTSNSTRTP) and 843–859 (RGPT…SEET).

Belongs to the STK11IP family.

The protein localises to the cytoplasm. This chain is Serine/threonine-protein kinase 11-interacting protein (STK11IP), found in Gallus gallus (Chicken).